The following is a 471-amino-acid chain: Methionine aminopeptidase 2 (471 aa).

2 disordered regions span residues valine 16–phenylalanine 80 and cysteine 92–arginine 139. A compositionally biased stretch (acidic residues) spans glutamate 32–valine 47. Residues lysine 52–glycine 65 show a composition bias toward basic residues. Positions alanine 119 to arginine 139 are enriched in basic and acidic residues. Histidine 224 contacts substrate. A divalent metal cation contacts are provided by aspartate 244, aspartate 255, and histidine 324. Histidine 332 is a substrate binding site. A divalent metal cation is bound by residues glutamate 357 and glutamate 452.

The protein belongs to the peptidase M24A family. Methionine aminopeptidase eukaryotic type 2 subfamily. Co(2+) serves as cofactor. The cofactor is Zn(2+). Mn(2+) is required as a cofactor. Requires Fe(2+) as cofactor.

It localises to the cytoplasm. It catalyses the reaction Release of N-terminal amino acids, preferentially methionine, from peptides and arylamides.. Its function is as follows. Cotranslationally removes the N-terminal methionine from nascent proteins. The N-terminal methionine is often cleaved when the second residue in the primary sequence is small and uncharged (Met-Ala-, Cys, Gly, Pro, Ser, Thr, or Val). The sequence is that of Methionine aminopeptidase 2 from Yarrowia lipolytica (strain CLIB 122 / E 150) (Yeast).